Here is a 473-residue protein sequence, read N- to C-terminus: Spliceosome-associated protein CWC27 homolog (473 aa).

An N-acetylserine modification is found at Ser2. In terms of domain architecture, PPIase cyclophilin-type spans 11–166 (TNGKVLLKTT…NPHKIKSCEV (156 aa)). The segment covering 177–193 (REIKRPKKEKPEEEVKK) has biased composition (basic and acidic residues). 2 disordered regions span residues 177–386 (REIK…EDQT) and 399–473 (QAIA…KERR). Residues 206–230 (SFGEEAEEEEEEVNRVSQSMKGKSK) adopt a coiled-coil conformation. Basic and acidic residues predominate over residues 231–241 (SSHDLLKDDPH). Residues 257–266 (GDLDDGGEGE) are compositionally biased toward acidic residues. Composition is skewed to basic and acidic residues over residues 267 to 287 (SAEH…ERIA), 305 to 348 (EVEK…KRSE), and 360 to 372 (EYRR…EALR). A coiled-coil region spans residues 305 to 378 (EVEKKSVNRS…EALRKQQSKK (74 aa)). Ser347 bears the Phosphoserine mark. Over residues 405–419 (PENDIPETEVEDDEG) the composition is skewed to acidic residues. 2 stretches are compositionally biased toward basic and acidic residues: residues 426 to 438 (QFED…KDAS) and 458 to 473 (RREE…KERR).

This sequence belongs to the cyclophilin-type PPIase family. As to quaternary structure, part of the activated spliceosome B/catalytic step 1 spliceosome, one of the forms of the spliceosome which has a well-formed active site but still cannot catalyze the branching reaction and is composed at least of 52 proteins, the U2, U5 and U6 snRNAs and the pre-mRNA. Recruited during early steps of activated spliceosome B maturation, it is probably one of the first proteins released from this complex as he matures to the spliceosome C complex. Component of the minor spliceosome, which splices U12-type introns.

It localises to the nucleus. Its function is as follows. As part of the spliceosome, plays a role in pre-mRNA splicing. Probable inactive PPIase with no peptidyl-prolyl cis-trans isomerase activity. As a component of the minor spliceosome, involved in the splicing of U12-type introns in pre-mRNAs. In Pongo abelii (Sumatran orangutan), this protein is Spliceosome-associated protein CWC27 homolog.